We begin with the raw amino-acid sequence, 612 residues long: PAN2-PAN3 deadenylation complex subunit PAN3 (612 aa).

The C3H1-type zinc finger occupies 10–39; sequence WAKDTPCKNITIYGYCKYENDGCIFNHGKP. Positions 44 to 62 are enriched in low complexity; that stretch reads SNTGGAAAGSAEDSAASGG. The segment at 44-64 is disordered; that stretch reads SNTGGAAAGSAEDSAASGGVT. 2 consecutive short sequence motifs (PABPC-interacting motif-2 (PAM-2)) follow at residues 84–104 and 111–131; these read SVAIPDFNNIPSFTPERIVSS and TAFTPSFNPYGSDSFNPSANV. Residues 231-481 are pseudokinase domain; it reads QVFPSDGNLP…TIAEFTALFS (251 aa). Residues arginine 286, 336-343, and 389-390 contribute to the ATP site; these read DYYPQSNS and DK. Residues 482–520 adopt a coiled-coil conformation; that stretch reads HKMLDIISSSQTYSEYIEQHLSRELENGRLFRLMCKLNF. Residues 521-612 are knob domain; it reads IFGRMESSMD…IDSTFRSMTQ (92 aa).

Belongs to the protein kinase superfamily. PAN3 family. As to quaternary structure, homodimer. Forms a heterotrimer with a catalytic subunit PAN2 to form the poly(A)-nuclease (PAN) deadenylation complex. Interacts (via PAM-2 motif) with poly(A)-binding protein PAB1 (via PABC domain), conferring substrate specificity of the enzyme complex.

Its subcellular location is the cytoplasm. Regulatory subunit of the poly(A)-nuclease (PAN) deadenylation complex, one of two cytoplasmic mRNA deadenylases involved in mRNA turnover. PAN specifically shortens poly(A) tails of RNA and the activity is stimulated by poly(A)-binding protein PAB1. PAN deadenylation is followed by rapid degradation of the shortened mRNA tails by the CCR4-NOT complex. Deadenylated mRNAs are then degraded by two alternative mechanisms, namely exosome-mediated 3'-5' exonucleolytic degradation, or deadenylation-dependent mRNA decaping and subsequent 5'-3' exonucleolytic degradation by XRN1. May also be involved in post-transcriptional maturation of mRNA poly(A) tails. PAN3 acts as a positive regulator for PAN activity, recruiting the catalytic subunit PAN2 to mRNA via its interaction with RNA and with PAB1. This Eremothecium gossypii (strain ATCC 10895 / CBS 109.51 / FGSC 9923 / NRRL Y-1056) (Yeast) protein is PAN2-PAN3 deadenylation complex subunit PAN3.